The sequence spans 299 residues: Protease HtpX homolog (299 aa).

2 helical membrane passes run 5 to 25 (IFLF…VLSV) and 44 to 64 (MVAL…MSLA). Histidine 155 lines the Zn(2+) pocket. Glutamate 156 is an active-site residue. Residue histidine 159 coordinates Zn(2+). A run of 2 helical transmembrane segments spans residues 170 to 190 (LLQG…AWIA) and 205 to 225 (FIAV…VVFA). Position 231 (glutamate 231) interacts with Zn(2+).

Belongs to the peptidase M48B family. It depends on Zn(2+) as a cofactor.

The protein resides in the cell membrane. The polypeptide is Protease HtpX homolog (Bacillus pumilus (strain SAFR-032)).